The sequence spans 195 residues: Imidazoleglycerol-phosphate dehydratase (195 aa).

The protein belongs to the imidazoleglycerol-phosphate dehydratase family.

The protein localises to the cytoplasm. It catalyses the reaction D-erythro-1-(imidazol-4-yl)glycerol 3-phosphate = 3-(imidazol-4-yl)-2-oxopropyl phosphate + H2O. It participates in amino-acid biosynthesis; L-histidine biosynthesis; L-histidine from 5-phospho-alpha-D-ribose 1-diphosphate: step 6/9. This Geobacter sulfurreducens (strain ATCC 51573 / DSM 12127 / PCA) protein is Imidazoleglycerol-phosphate dehydratase.